The chain runs to 161 residues: Endoribonuclease YbeY (161 aa).

The Zn(2+) site is built by His120, His124, and Asp130.

The protein belongs to the endoribonuclease YbeY family. Requires Zn(2+) as cofactor.

The protein resides in the cytoplasm. Functionally, single strand-specific metallo-endoribonuclease involved in late-stage 70S ribosome quality control and in maturation of the 3' terminus of the 16S rRNA. This is Endoribonuclease YbeY from Chlamydia muridarum (strain MoPn / Nigg).